We begin with the raw amino-acid sequence, 172 residues long: uncharacterized protein (172 aa).

Topologically, residues 1 to 101 (MEHVSKRSIG…RYDINTRPLV (101 aa)) are lumenal. A helical membrane pass occupies residues 102-122 (VVLAISIVFFGCLLVLKDIII). The Cytoplasmic portion of the chain corresponds to 123-145 (QSSENILSVSKWKIIGASFMGTP). Residues 146–164 (YTGLLTGLVGPLLSPFSAV) form a helical membrane-spanning segment. Over 165-172 (SSWLSFIF) the chain is Lumenal.

The protein resides in the endoplasmic reticulum membrane. This is an uncharacterized protein from Saccharomyces cerevisiae (strain ATCC 204508 / S288c) (Baker's yeast).